A 299-amino-acid polypeptide reads, in one-letter code: Tyrosine recombinase XerC (299 aa).

In terms of domain architecture, Core-binding (CB) spans 1 to 85 (MQNELDAYFE…SVRGLYRYLN (85 aa)). In terms of domain architecture, Tyr recombinase spans 106 to 285 (RLPRLLDTDR…DFQHLAKVYD (180 aa)). Active-site residues include Arg146, Lys170, His237, Arg240, and His263. Residue Tyr272 is the O-(3'-phospho-DNA)-tyrosine intermediate of the active site.

This sequence belongs to the 'phage' integrase family. XerC subfamily. In terms of assembly, forms a cyclic heterotetrameric complex composed of two molecules of XerC and two molecules of XerD.

The protein resides in the cytoplasm. Its function is as follows. Site-specific tyrosine recombinase, which acts by catalyzing the cutting and rejoining of the recombining DNA molecules. The XerC-XerD complex is essential to convert dimers of the bacterial chromosome into monomers to permit their segregation at cell division. It also contributes to the segregational stability of plasmids. This Stutzerimonas stutzeri (strain A1501) (Pseudomonas stutzeri) protein is Tyrosine recombinase XerC.